The primary structure comprises 82 residues: DNA-directed RNA polymerase subunit Rpo5 (82 aa).

It belongs to the archaeal Rpo5/eukaryotic RPB5 RNA polymerase subunit family. As to quaternary structure, part of the RNA polymerase complex.

It is found in the cytoplasm. It carries out the reaction RNA(n) + a ribonucleoside 5'-triphosphate = RNA(n+1) + diphosphate. DNA-dependent RNA polymerase (RNAP) catalyzes the transcription of DNA into RNA using the four ribonucleoside triphosphates as substrates. The chain is DNA-directed RNA polymerase subunit Rpo5 from Thermococcus onnurineus (strain NA1).